A 520-amino-acid polypeptide reads, in one-letter code: GMP synthase [glutamine-hydrolyzing] (520 aa).

The region spanning 12-205 (KIIVLDYGSQ…AISICGARGD (194 aa)) is the Glutamine amidotransferase type-1 domain. Cys89 functions as the Nucleophile in the catalytic mechanism. Catalysis depends on residues His179 and Glu181. The GMPS ATP-PPase domain occupies 206-395 (WSMDNFIDME…LGMPEEIVWR (190 aa)). 233-239 (SGGVDSS) lines the ATP pocket.

In terms of assembly, homodimer.

The catalysed reaction is XMP + L-glutamine + ATP + H2O = GMP + L-glutamate + AMP + diphosphate + 2 H(+). The protein operates within purine metabolism; GMP biosynthesis; GMP from XMP (L-Gln route): step 1/1. Its function is as follows. Catalyzes the synthesis of GMP from XMP. This Streptococcus pyogenes serotype M3 (strain SSI-1) protein is GMP synthase [glutamine-hydrolyzing].